Consider the following 699-residue polypeptide: eEF1A lysine and N-terminal methyltransferase (699 aa).

Methionine 1 carries the N-acetylmethionine modification. Serine 267 carries the phosphoserine modification. The disordered stretch occupies residues 433–459 (VSHKAQKKRKKDRKKQRPADAEDLPAA). Residues 436 to 448 (KAQKKRKKDRKKQ) are compositionally biased toward basic residues.

This sequence belongs to the methyltransferase superfamily. Forms a tripartite complex containing GAB1, METTL13 and SPRY2. Within the complex interacts with GAB1 and SPRY2.

Its subcellular location is the cytoplasm. It is found in the nucleus. The protein resides in the mitochondrion. It carries out the reaction L-lysyl-[protein] + S-adenosyl-L-methionine = N(6)-methyl-L-lysyl-[protein] + S-adenosyl-L-homocysteine + H(+). The enzyme catalyses N(6)-methyl-L-lysyl-[protein] + S-adenosyl-L-methionine = N(6),N(6)-dimethyl-L-lysyl-[protein] + S-adenosyl-L-homocysteine + H(+). It catalyses the reaction N-terminal glycyl-L-lysyl-L-glutamyl-[protein] + 3 S-adenosyl-L-methionine = N-terminal N,N,N-trimethyl-glycyl-L-lysyl-L-glutamyl-[protein] + 3 S-adenosyl-L-homocysteine + 3 H(+). With respect to regulation, protein N-terminal methyltransferase activity is inhibited by GTP and GDP. In terms of biological role, dual methyltransferase that catalyzes methylation of elongation factor 1-alpha (EEF1A1 and EEF1A2) at two different positions, and is therefore involved in the regulation of mRNA translation. Via its C-terminus, methylates EEF1A1 and EEF1A2 at the N-terminal residue 'Gly-2'. Via its N-terminus dimethylates EEF1A1 and EEF1A2 at residue 'Lys-55'. Has no activity towards core histones H2A, H2B, H3 and H4. The polypeptide is eEF1A lysine and N-terminal methyltransferase (Homo sapiens (Human)).